A 291-amino-acid chain; its full sequence is Release factor glutamine methyltransferase (291 aa).

Residues 127 to 131 (GTGSG), Asp150, Trp179, and Asn196 each bind S-adenosyl-L-methionine. 196-199 (NPPY) is a binding site for substrate.

The protein belongs to the protein N5-glutamine methyltransferase family. PrmC subfamily.

The catalysed reaction is L-glutaminyl-[peptide chain release factor] + S-adenosyl-L-methionine = N(5)-methyl-L-glutaminyl-[peptide chain release factor] + S-adenosyl-L-homocysteine + H(+). In terms of biological role, methylates the class 1 translation termination release factors RF1/PrfA and RF2/PrfB on the glutamine residue of the universally conserved GGQ motif. This is Release factor glutamine methyltransferase from Thermosynechococcus vestitus (strain NIES-2133 / IAM M-273 / BP-1).